Here is a 992-residue protein sequence, read N- to C-terminus: UvrABC system protein A (992 aa).

Residues 1 to 11 (MPKNSSTTVSS) show a composition bias toward polar residues. The tract at residues 1–30 (MPKNSSTTVSSAVEAHAGGLASGPGGARSG) is disordered. Residue 62-69 (GLSGSGKS) coordinates ATP. The C4-type; atypical zinc-finger motif lies at 302-330 (CPNGHEQTVDEIEPRSFSFNNPFGACPEC). 2 ABC transporter domains span residues 360–639 (WSLG…TRSV) and 659–988 (PEKG…RFLA). 692 to 699 (GVSGSGKS) contacts ATP. The C4-type zinc-finger motif lies at 791 to 817 (CEACAGDGTLKIEMNFLPDVYVPCEVC).

Belongs to the ABC transporter superfamily. UvrA family. Forms a heterotetramer with UvrB during the search for lesions.

It is found in the cytoplasm. In terms of biological role, the UvrABC repair system catalyzes the recognition and processing of DNA lesions. UvrA is an ATPase and a DNA-binding protein. A damage recognition complex composed of 2 UvrA and 2 UvrB subunits scans DNA for abnormalities. When the presence of a lesion has been verified by UvrB, the UvrA molecules dissociate. The protein is UvrABC system protein A of Micrococcus luteus (Micrococcus lysodeikticus).